Here is a 131-residue protein sequence, read N- to C-terminus: uncharacterized protein (131 aa).

Residues 8 to 124 enclose the Response regulatory domain; that stretch reads DILVVDDDPD…ELIRLVQQYC (117 aa). Asp57 is subject to 4-aspartylphosphate.

This is an uncharacterized protein from Leptolyngbya boryana (Plectonema boryanum).